The following is a 186-amino-acid chain: Translation initiation factor IF-3 (186 aa).

It belongs to the IF-3 family. In terms of assembly, monomer.

The protein localises to the cytoplasm. In terms of biological role, IF-3 binds to the 30S ribosomal subunit and shifts the equilibrium between 70S ribosomes and their 50S and 30S subunits in favor of the free subunits, thus enhancing the availability of 30S subunits on which protein synthesis initiation begins. This Borrelia garinii subsp. bavariensis (strain ATCC BAA-2496 / DSM 23469 / PBi) (Borreliella bavariensis) protein is Translation initiation factor IF-3.